The primary structure comprises 396 residues: Putative N(4)-(beta-N-acetylglucosaminyl)-L-asparaginase GE19290 (396 aa).

The N-terminal stretch at 1 to 23 (MKRHLKACLWVLCFASTALSSLA) is a signal peptide. Disulfide bonds link cysteine 100-cysteine 105 and cysteine 199-cysteine 215. Threonine 246 acts as the Nucleophile in catalysis. Residues 274–277 (RVGD) and 297–300 (TGDG) contribute to the substrate site. Cysteine 357 and cysteine 384 are oxidised to a cystine.

This sequence belongs to the Ntn-hydrolase family. As to quaternary structure, heterotetramer of two alpha and two beta chains arranged as a dimer of alpha/beta heterodimers. Cleaved into an alpha and beta chain by autocatalysis; this activates the enzyme. The N-terminal residue of the beta subunit is responsible for the nucleophile hydrolase activity.

It carries out the reaction N(4)-(beta-N-acetyl-D-glucosaminyl)-L-asparagine + H2O = N-acetyl-beta-D-glucosaminylamine + L-aspartate + H(+). In terms of biological role, cleaves the GlcNAc-Asn bond which joins oligosaccharides to the peptide of asparagine-linked glycoproteins. This Drosophila yakuba (Fruit fly) protein is Putative N(4)-(beta-N-acetylglucosaminyl)-L-asparaginase GE19290.